The primary structure comprises 106 residues: Transcription initiation factor IIA subunit 2 (106 aa).

It belongs to the TFIIA subunit 2 family. In terms of assembly, TFIIA is a heterodimer of the large unprocessed subunit 1 and a small subunit gamma. It was originally believed to be a heterotrimer of an alpha (p30), a beta (p20) and a gamma (p14) subunit. Forms a complex with Moonshiner/CG12721 and Trf2. Ubiquitous.

Its subcellular location is the nucleus. Functionally, TFIIA is a component of the transcription machinery of RNA polymerase II and plays an important role in transcriptional activation. TFIIA in a complex with TBP mediates transcriptional activity. Part of a rhi-dependent transcription machinery that enables the generation of piRNA precursors from heterochromatin while maintaining the suppression of transposon-encoded promoters and enhancers. Forms a complex with Moonshiner/CG12721 and Trf2 which recruit transcriptional machinery to heterochromatin to initiate the bidirectional transcription of piRNA clusters, by interacting with the RDC (rhi, del and cuff) complex that binds to repressive H3K9me3 marks in the chromatin. This mechanism allows transcription to occur in piRNA clusters despite the lack of proper promoter elements and in the presence of the repressive H3K9me3 mark. The chain is Transcription initiation factor IIA subunit 2 (TfIIA-S) from Drosophila melanogaster (Fruit fly).